Here is a 363-residue protein sequence, read N- to C-terminus: Ribosome-binding ATPase YchF (363 aa).

An OBG-type G domain is found at 3–256 (FKCGIVGLPN…LEDEEKVDFL (254 aa)). ATP is bound at residue 12 to 17 (NVGKST). Mg(2+) contacts are provided by serine 16 and threonine 36. A TGS domain is found at 278–361 (NLQTYFTAGV…QDGDVMHFRF (84 aa)).

This sequence belongs to the TRAFAC class OBG-HflX-like GTPase superfamily. OBG GTPase family. YchF/OLA1 subfamily. Mg(2+) is required as a cofactor.

ATPase that binds to both the 70S ribosome and the 50S ribosomal subunit in a nucleotide-independent manner. The chain is Ribosome-binding ATPase YchF from Haemophilus ducreyi (strain 35000HP / ATCC 700724).